A 397-amino-acid polypeptide reads, in one-letter code: Tryptophan synthase beta chain (397 aa).

An N6-(pyridoxal phosphate)lysine modification is found at lysine 86.

This sequence belongs to the TrpB family. As to quaternary structure, tetramer of two alpha and two beta chains. Pyridoxal 5'-phosphate serves as cofactor.

The catalysed reaction is (1S,2R)-1-C-(indol-3-yl)glycerol 3-phosphate + L-serine = D-glyceraldehyde 3-phosphate + L-tryptophan + H2O. It functions in the pathway amino-acid biosynthesis; L-tryptophan biosynthesis; L-tryptophan from chorismate: step 5/5. Its function is as follows. The beta subunit is responsible for the synthesis of L-tryptophan from indole and L-serine. The chain is Tryptophan synthase beta chain from Edwardsiella ictaluri (strain 93-146).